Consider the following 173-residue polypeptide: FMN reductase (NADH) RutF 2 (173 aa).

The protein belongs to the non-flavoprotein flavin reductase family. RutF subfamily.

The enzyme catalyses FMNH2 + NAD(+) = FMN + NADH + 2 H(+). Catalyzes the reduction of FMN to FMNH2 which is used to reduce pyrimidine by RutA via the Rut pathway. The chain is FMN reductase (NADH) RutF 2 from Rhizobium rhizogenes (strain K84 / ATCC BAA-868) (Agrobacterium radiobacter).